The sequence spans 337 residues: Holliday junction branch migration complex subunit RuvB (337 aa).

Residues alanine 4–tyrosine 184 are large ATPase domain (RuvB-L). ATP is bound by residues isoleucine 23, arginine 24, glycine 65, lysine 68, threonine 69, threonine 70, glutamate 131–tyrosine 133, arginine 174, tyrosine 184, and arginine 221. Residue threonine 69 participates in Mg(2+) binding. Residues asparagine 185–glutamate 255 are small ATPAse domain (RuvB-S). A head domain (RuvB-H) region spans residues serine 258 to aspartate 337. DNA is bound by residues arginine 294, arginine 313, and arginine 318.

This sequence belongs to the RuvB family. Homohexamer. Forms an RuvA(8)-RuvB(12)-Holliday junction (HJ) complex. HJ DNA is sandwiched between 2 RuvA tetramers; dsDNA enters through RuvA and exits via RuvB. An RuvB hexamer assembles on each DNA strand where it exits the tetramer. Each RuvB hexamer is contacted by two RuvA subunits (via domain III) on 2 adjacent RuvB subunits; this complex drives branch migration. In the full resolvosome a probable DNA-RuvA(4)-RuvB(12)-RuvC(2) complex forms which resolves the HJ.

It is found in the cytoplasm. The catalysed reaction is ATP + H2O = ADP + phosphate + H(+). In terms of biological role, the RuvA-RuvB-RuvC complex processes Holliday junction (HJ) DNA during genetic recombination and DNA repair, while the RuvA-RuvB complex plays an important role in the rescue of blocked DNA replication forks via replication fork reversal (RFR). RuvA specifically binds to HJ cruciform DNA, conferring on it an open structure. The RuvB hexamer acts as an ATP-dependent pump, pulling dsDNA into and through the RuvAB complex. RuvB forms 2 homohexamers on either side of HJ DNA bound by 1 or 2 RuvA tetramers; 4 subunits per hexamer contact DNA at a time. Coordinated motions by a converter formed by DNA-disengaged RuvB subunits stimulates ATP hydrolysis and nucleotide exchange. Immobilization of the converter enables RuvB to convert the ATP-contained energy into a lever motion, pulling 2 nucleotides of DNA out of the RuvA tetramer per ATP hydrolyzed, thus driving DNA branch migration. The RuvB motors rotate together with the DNA substrate, which together with the progressing nucleotide cycle form the mechanistic basis for DNA recombination by continuous HJ branch migration. Branch migration allows RuvC to scan DNA until it finds its consensus sequence, where it cleaves and resolves cruciform DNA. This Colwellia psychrerythraea (strain 34H / ATCC BAA-681) (Vibrio psychroerythus) protein is Holliday junction branch migration complex subunit RuvB.